The sequence spans 165 residues: UPF0303 protein Bphyt_1734 (165 aa).

This sequence belongs to the UPF0303 family.

This is UPF0303 protein Bphyt_1734 from Paraburkholderia phytofirmans (strain DSM 17436 / LMG 22146 / PsJN) (Burkholderia phytofirmans).